We begin with the raw amino-acid sequence, 219 residues long: Cytochrome c oxidase assembly protein CtaG (219 aa).

The span at 1–13 (MDATDQGKSTSTT) shows a compositional bias: polar residues. The tract at residues 1–24 (MDATDQGKSTSTTAAQAAPGKAAP) is disordered. Over 1–29 (MDATDQGKSTSTTAAQAAPGKAAPRRGIG) the chain is Cytoplasmic. Positions 14-24 (AAQAAPGKAAP) are enriched in low complexity. Residues 30–52 (RDALVGGICGAVVVLMIGASYAA) traverse the membrane as a helical; Signal-anchor for type II membrane protein segment. Topologically, residues 53-219 (VPFYNWFCRA…GEPDKPRGSL (167 aa)) are periplasmic.

It belongs to the COX11/CtaG family.

It localises to the cell inner membrane. In terms of biological role, exerts its effect at some terminal stage of cytochrome c oxidase synthesis, probably by being involved in the insertion of the copper B into subunit I. The protein is Cytochrome c oxidase assembly protein CtaG of Bradyrhizobium sp. (strain ORS 278).